The chain runs to 338 residues: Lipoate-protein ligase A (338 aa).

The region spanning 29–216 (PATQRVLFLW…AFFAHYGERI (188 aa)) is the BPL/LPL catalytic domain. Residues R71, 76 to 79 (GAVF), and K134 each bind ATP. Residue K134 coordinates (R)-lipoate.

The protein belongs to the LplA family. In terms of assembly, monomer.

The protein resides in the cytoplasm. The enzyme catalyses L-lysyl-[lipoyl-carrier protein] + (R)-lipoate + ATP = N(6)-[(R)-lipoyl]-L-lysyl-[lipoyl-carrier protein] + AMP + diphosphate + H(+). It functions in the pathway protein modification; protein lipoylation via exogenous pathway; protein N(6)-(lipoyl)lysine from lipoate: step 1/2. The protein operates within protein modification; protein lipoylation via exogenous pathway; protein N(6)-(lipoyl)lysine from lipoate: step 2/2. Its function is as follows. Catalyzes both the ATP-dependent activation of exogenously supplied lipoate to lipoyl-AMP and the transfer of the activated lipoyl onto the lipoyl domains of lipoate-dependent enzymes. The chain is Lipoate-protein ligase A from Salmonella paratyphi A (strain ATCC 9150 / SARB42).